The primary structure comprises 485 residues: MTITPQHLIALLPLLIVGLTVVVVMLSIAWRRNHFLNATLSVIGLNAALVSLWFVGQAGAMDVTPLMRVDGFAMLYTGLVLLASLATCTFAYPWLEGYNDNQEEFYLLVLIASLGGILLTNANHLAALFLGIELISLPLFGLIGYAFRQKRSLEASIKYTILSAAASSFLLFGMALVYAQSGNLSFEALGKSLGDGMLHEPLLLAGFGLMIVGLGFKLSLVPFHLWTPDVYQGAPAPVSTFLATASKIAIFGVVMRLFLYAPVGDSEAVRVVLGIIAFASIIFGNLMALSQTNIKRLLGYSSISHLGYLLVALIALQSGEMSMEAVGVYLAGYLFSSLGAFGVVSLMSSPFRGPDADSLYSYRGLFWHRPVLAAVMTVMMLSLAGIPMTLGFIGKFYVLAVGVQASLWWLVAAVVVGSAIGLYYYLRVAVSLYLHAPQQPGRDAPTNWQYSAGGIVVLISALLVLVLGVWPQPLISLVQLAMPLM.

The next 14 membrane-spanning stretches (helical) occupy residues 8–28 (LIAL…MLSI), 35–55 (FLNA…LWFV), 71–91 (GFAM…CTFA), 105–125 (FYLL…ANHL), 127–147 (ALFL…GYAF), 159–179 (YTIL…LVYA), 203–223 (LLAG…LVPF), 235–255 (PAPV…GVVM), 271–291 (VVLG…ALSQ), 297–317 (LLGY…IALQ), 326–346 (VGVY…VVSL), 373–393 (AAVM…LGFI), 408–430 (WWLV…RVAV), and 455–475 (IVVL…QPLI).

This sequence belongs to the complex I subunit 2 family. NDH-1 is composed of 13 different subunits. Subunits NuoA, H, J, K, L, M, N constitute the membrane sector of the complex.

Its subcellular location is the cell inner membrane. The catalysed reaction is a quinone + NADH + 5 H(+)(in) = a quinol + NAD(+) + 4 H(+)(out). Its function is as follows. NDH-1 shuttles electrons from NADH, via FMN and iron-sulfur (Fe-S) centers, to quinones in the respiratory chain. The immediate electron acceptor for the enzyme in this species is believed to be ubiquinone. Couples the redox reaction to proton translocation (for every two electrons transferred, four hydrogen ions are translocated across the cytoplasmic membrane), and thus conserves the redox energy in a proton gradient. In Salmonella dublin (strain CT_02021853), this protein is NADH-quinone oxidoreductase subunit N.